The primary structure comprises 476 residues: Angiotensinogen (476 aa).

Positions M1–G24 are cleaved as a signal peptide. A disulfide bridge connects residues C42 and C161. The disordered stretch occupies residues L45–Q64. Residue N295 is glycosylated (N-linked (GlcNAc...) asparagine).

The protein belongs to the serpin family. Post-translationally, in response to low blood pressure, the enzyme renin/REN cleaves angiotensinogen to produce angiotensin-1. Angiotensin-1 is a substrate of ACE (angiotensin converting enzyme) that removes a dipeptide to yield the physiologically active peptide angiotensin-2. Angiotensin-1 and angiotensin-2 can be further processed to generate angiotensin-3, angiotensin-4. Angiotensin 1-9 is cleaved from angiotensin-1 by ACE2 and can be further processed by ACE to produce angiotensin 1-7, angiotensin 1-5 and angiotensin 1-4. Angiotensin 1-7 has also been proposed to be cleaved from angiotensin-2 by ACE2 or from angiotensin-1 by MME (neprilysin). The disulfide bond is labile. Angiotensinogen is present in the circulation in a near 40:60 ratio with the oxidized disulfide-bonded form, which preferentially interacts with receptor-bound renin.

It is found in the secreted. Essential component of the renin-angiotensin system (RAS), a potent regulator of blood pressure, body fluid and electrolyte homeostasis. Its function is as follows. Acts directly on vascular smooth muscle as a potent vasoconstrictor, affects cardiac contractility and heart rate through its action on the sympathetic nervous system, and alters renal sodium and water absorption through its ability to stimulate the zona glomerulosa cells of the adrenal cortex to synthesize and secrete aldosterone. Acts by binding to angiotensin receptors AGTR1 and AGTR2. Also binds the DEAR/FBXW7-AS1 receptor. In terms of biological role, stimulates aldosterone release. Functionally, is a ligand for the G-protein coupled receptor MAS1. Has vasodilator and antidiuretic effects. Has an antithrombotic effect that involves MAS1-mediated release of nitric oxide from platelets. This is Angiotensinogen (AGT) from Ovis aries (Sheep).